The sequence spans 338 residues: Phenylalanine--tRNA ligase alpha subunit (338 aa).

A Mg(2+)-binding site is contributed by glutamate 252.

Belongs to the class-II aminoacyl-tRNA synthetase family. Phe-tRNA synthetase alpha subunit type 1 subfamily. Tetramer of two alpha and two beta subunits. The cofactor is Mg(2+).

Its subcellular location is the cytoplasm. The catalysed reaction is tRNA(Phe) + L-phenylalanine + ATP = L-phenylalanyl-tRNA(Phe) + AMP + diphosphate + H(+). The polypeptide is Phenylalanine--tRNA ligase alpha subunit (Fusobacterium nucleatum subsp. nucleatum (strain ATCC 25586 / DSM 15643 / BCRC 10681 / CIP 101130 / JCM 8532 / KCTC 2640 / LMG 13131 / VPI 4355)).